The sequence spans 825 residues: Leucine-rich repeat and guanylate kinase domain-containing protein (825 aa).

The disordered stretch occupies residues 73–96 (DSDGDEDQGEGEAGSEESSESEML). LRR repeat units follow at residues 129–149 (YLNLTLSGCNLIDVSILCGYV), 150–171 (HLQKLDLSANKIEDLSCVSCMP), 172–193 (YLLELNASQNNLTTFFNFKPPK), 194–215 (NLKKADFSHNQISEICDLSAYH), 216–237 (ALTKLILDGNEIEEISGLEMCN), 238–259 (NLIHLSLANNKITTINGLNKLP), 260–280 (IKILCLSNNQIEMITGLEDLK), 281–302 (ALQNLDLSHNQISSLQGLENHD), and 303–324 (LLEVINLEDNKIAELREIEYIK). The LRRCT domain occupies 337 to 375 (NPIQEKSEYWFFVIFMLLRLTELDQKKIKVEEKVSAVNK). The Guanylate kinase-like domain occupies 414 to 597 (YPMLILAGPE…AYQKLSQLIR (184 aa)). 421–428 (GPEACGKR) contributes to the ATP binding site. The disordered stretch occupies residues 760 to 825 (PEGSISSHLG…TLPPIPQGRR (66 aa)). The span at 763-774 (SISSHLGSGASD) shows a compositional bias: polar residues. A compositionally biased stretch (pro residues) spans 816-825 (TLPPIPQGRR).

Interacts (via guanylate kinase-like domain) with RIMBP3 (via coiled-coil region). Interacts (via guanylate kinase-like domain) with HOOK2. Interacts (via LRRCT domain) with KLC3. Interacts with HOOK1 and HOOK3.

Its subcellular location is the cytoplasmic vesicle. The protein localises to the secretory vesicle. It localises to the acrosome. It is found in the cytoplasm. The protein resides in the cytoskeleton. Its subcellular location is the cilium basal body. Functionally, involved in multiple aspects of sperm assembly including acrosome attachment, shaping of the sperm head and in the early aspects of axoneme development. Not essential for primary cilium biogenesis. This is Leucine-rich repeat and guanylate kinase domain-containing protein (LRGUK) from Homo sapiens (Human).